The chain runs to 371 residues: Probable trehalose-phosphate phosphatase 1 (371 aa).

The protein belongs to the trehalose phosphatase family. The cofactor is a divalent metal cation. In terms of tissue distribution, expressed in roots and shoots.

It catalyses the reaction alpha,alpha-trehalose 6-phosphate + H2O = alpha,alpha-trehalose + phosphate. It functions in the pathway glycan biosynthesis; trehalose biosynthesis. Its function is as follows. Removes the phosphate from trehalose 6-phosphate to produce free trehalose. Trehalose accumulation in plant improves abiotic stress tolerance. This chain is Probable trehalose-phosphate phosphatase 1 (TPP1), found in Oryza sativa subsp. japonica (Rice).